Consider the following 341-residue polypeptide: Phenylalanine--tRNA ligase alpha subunit (341 aa).

Glutamate 254 contacts Mg(2+).

It belongs to the class-II aminoacyl-tRNA synthetase family. Phe-tRNA synthetase alpha subunit type 1 subfamily. Tetramer of two alpha and two beta subunits. Mg(2+) serves as cofactor.

The protein resides in the cytoplasm. The catalysed reaction is tRNA(Phe) + L-phenylalanine + ATP = L-phenylalanyl-tRNA(Phe) + AMP + diphosphate + H(+). The chain is Phenylalanine--tRNA ligase alpha subunit (pheS) from Mycoplasma genitalium (strain ATCC 33530 / DSM 19775 / NCTC 10195 / G37) (Mycoplasmoides genitalium).